A 148-amino-acid chain; its full sequence is Small ribosomal subunit protein uS7c (148 aa).

It belongs to the universal ribosomal protein uS7 family. In terms of assembly, part of the 30S ribosomal subunit.

Its subcellular location is the plastid. It localises to the chloroplast. In terms of biological role, one of the primary rRNA binding proteins, it binds directly to 16S rRNA where it nucleates assembly of the head domain of the 30S subunit. This chain is Small ribosomal subunit protein uS7c (rps7), found in Cyanidioschyzon merolae (strain NIES-3377 / 10D) (Unicellular red alga).